The following is a 577-amino-acid chain: Chaperonin CPN60-1, mitochondrial (577 aa).

A mitochondrion-targeting transit peptide spans 1 to 34 (MYRAAASLASKARQAGNSLATRQVGSRLAWSRNY).

The protein belongs to the chaperonin (HSP60) family.

It is found in the mitochondrion. Functionally, implicated in mitochondrial protein import and macromolecular assembly. May facilitate the correct folding of imported proteins. May also prevent misfolding and promote the refolding and proper assembly of unfolded polypeptides generated under stress conditions in the mitochondrial matrix. The protein is Chaperonin CPN60-1, mitochondrial (CPN60I) of Zea mays (Maize).